We begin with the raw amino-acid sequence, 836 residues long: uncharacterized protein (836 aa).

Disordered stretches follow at residues 1–25, 692–718, and 789–836; these read MDST…NEEE, DSRS…NNQR, and ESSG…GYAS. Composition is skewed to polar residues over residues 789–799 and 825–836; these read ESSGINVSNTR and IDSSSAQNGYAS.

It is found in the nucleus. This is an uncharacterized protein from Schizosaccharomyces pombe (strain 972 / ATCC 24843) (Fission yeast).